Here is a 51-residue protein sequence, read N- to C-terminus: Large ribosomal subunit protein bL33 (51 aa).

This sequence belongs to the bacterial ribosomal protein bL33 family.

This is Large ribosomal subunit protein bL33 from Pseudomonas putida (strain ATCC 47054 / DSM 6125 / CFBP 8728 / NCIMB 11950 / KT2440).